The following is a 315-amino-acid chain: Phosphomutase-like protein 3 (315 aa).

The N-terminal stretch at 1–19 (MQQFLTLGALWTLFNVATT) is a signal peptide. Histidine 77 (tele-phosphohistidine intermediate) is an active-site residue. N-linked (GlcNAc...) asparagine glycosylation is found at asparagine 88 and asparagine 154. Residue glutamate 173 is the Proton donor/acceptor of the active site. N-linked (GlcNAc...) asparagine glycosylation occurs at asparagine 185. Asparagine 286 is lipidated: GPI-anchor amidated asparagine. Residues 287–315 (DAWDTFKDWCPNPPASISGTATSTATGSA) constitute a propeptide, removed in mature form.

This sequence belongs to the phosphoglycerate mutase family.

The protein resides in the cell membrane. This chain is Phosphomutase-like protein 3 (PGA12), found in Candida albicans (strain SC5314 / ATCC MYA-2876) (Yeast).